A 184-amino-acid chain; its full sequence is ATP-dependent protease subunit HslV (184 aa).

Threonine 12 is a catalytic residue. Na(+)-binding residues include alanine 167, cysteine 170, and threonine 173.

Belongs to the peptidase T1B family. HslV subfamily. In terms of assembly, a double ring-shaped homohexamer of HslV is capped on each side by a ring-shaped HslU homohexamer. The assembly of the HslU/HslV complex is dependent on binding of ATP.

The protein resides in the cytoplasm. It carries out the reaction ATP-dependent cleavage of peptide bonds with broad specificity.. With respect to regulation, allosterically activated by HslU binding. Protease subunit of a proteasome-like degradation complex believed to be a general protein degrading machinery. The polypeptide is ATP-dependent protease subunit HslV (Wolbachia pipientis subsp. Culex pipiens (strain wPip)).